Here is a 145-residue protein sequence, read N- to C-terminus: Actin-related protein 4A (145 aa).

A disordered region spans residues 47 to 66 (IDDAANTTEDAKESDKEKGK). The span at 55–64 (EDAKESDKEK) shows a compositional bias: basic and acidic residues.

It belongs to the actin family. ARP4 subfamily. In terms of tissue distribution, expressed in roots, leaves and flowers.

This is Actin-related protein 4A (ARP4A) from Arabidopsis thaliana (Mouse-ear cress).